The sequence spans 237 residues: Octopine transport system permease protein OccQ (237 aa).

One can recognise an ABC transmembrane type-1 domain in the interval 22 to 222; that stretch reads TGMTVAVASS…LITFISGQAF (201 aa). 4 helical membrane passes run 24 to 44, 72 to 92, 96 to 116, and 201 to 221; these read MTVA…CLGA, LVIY…GSLF, GFVS…VSAA, and FSFY…SGQA.

Belongs to the binding-protein-dependent transport system permease family. HisMQ subfamily.

Its subcellular location is the cell inner membrane. Functionally, component of the octopine active transport system probably consisting of four subunits: Q, M, P and T. The polypeptide is Octopine transport system permease protein OccQ (occQ) (Rhizobium meliloti (Ensifer meliloti)).